A 552-amino-acid polypeptide reads, in one-letter code: Probable inorganic phosphate transporter 1-10 (552 aa).

At Met-1–Ala-22 the chain is on the cytoplasmic side. A helical transmembrane segment spans residues Ile-23 to Val-43. Over Met-44–Ser-68 the chain is Extracellular. The helical transmembrane segment at Ala-69–Gly-89 threads the bilayer. Over Asp-90–Arg-96 the chain is Cytoplasmic. A helical membrane pass occupies residues Val-97–Cys-117. Residues Arg-118–Ala-123 lie on the Extracellular side of the membrane. The chain crosses the membrane as a helical span at residues Leu-124 to Leu-144. Over Ser-145–Arg-158 the chain is Cytoplasmic. A helical transmembrane segment spans residues Gly-159–Val-179. Residues Thr-180–Ala-203 lie on the Extracellular side of the membrane. Residues Asp-204–Trp-224 form a helical membrane-spanning segment. The Cytoplasmic segment spans residues Arg-225–Asp-295. Residues Leu-296–Phe-316 traverse the membrane as a helical segment. Topologically, residues Gln-317–Lys-342 are extracellular. The chain crosses the membrane as a helical span at residues Phe-343 to Ile-363. Topologically, residues Asp-364–Arg-369 are cytoplasmic. A helical membrane pass occupies residues Cys-370–Tyr-390. At Asp-391–His-397 the chain is on the extracellular side. Residues Gly-398 to Pro-418 traverse the membrane as a helical segment. Residues Asn-419 to His-439 are Cytoplasmic-facing. Residues Gly-440–Ala-460 form a helical membrane-spanning segment. Residues Ser-461 to Pro-473 lie on the Extracellular side of the membrane. The helical transmembrane segment at Gly-474–Leu-494 threads the bilayer. Over Thr-495–Val-552 the chain is Cytoplasmic. A disordered region spans residues Leu-507–Leu-540.

It belongs to the major facilitator superfamily. Phosphate:H(+) symporter (TC 2.A.1.9) family. As to expression, expressed at low levels in roots.

Its subcellular location is the membrane. Its function is as follows. High-affinity transporter for external inorganic phosphate. This is Probable inorganic phosphate transporter 1-10 (PHT1-10) from Oryza sativa subsp. japonica (Rice).